The sequence spans 138 residues: Large ribosomal subunit protein uL16 (138 aa).

The protein belongs to the universal ribosomal protein uL16 family. In terms of assembly, part of the 50S ribosomal subunit.

Its function is as follows. Binds 23S rRNA and is also seen to make contacts with the A and possibly P site tRNAs. In Nitrosomonas europaea (strain ATCC 19718 / CIP 103999 / KCTC 2705 / NBRC 14298), this protein is Large ribosomal subunit protein uL16.